A 365-amino-acid chain; its full sequence is Parathion hydrolase (365 aa).

The segment at residues 1–29 is a signal peptide (tat-type signal); sequence MQTRRVVLKSAAAAGTLLGGLAGCASVAG. Zn(2+)-binding residues include His-55, His-57, Lys-169, His-201, His-230, and Asp-301. Lys-169 carries the post-translational modification N6-carboxylysine.

This sequence belongs to the metallo-dependent hydrolases superfamily. Phosphotriesterase family. In terms of assembly, homodimer. Zn(2+) serves as cofactor. In terms of processing, predicted to be exported by the Tat system. The position of the signal peptide cleavage has been experimentally proven.

Its subcellular location is the cell membrane. It carries out the reaction An aryl dialkyl phosphate + H2O = dialkyl phosphate + an aryl alcohol.. Has an unusual substrate specificity for synthetic organophosphate triesters and phosphorofluoridates. All of the phosphate triesters found to be substrates are synthetic compounds. The identity of any naturally occurring substrate for the enzyme is unknown. Has no detectable activity with phosphate monoesters or diesters and no activity as an esterase or protease. It catalyzes the hydrolysis of the insecticide paraoxon at a rate approaching the diffusion limit and thus appears to be optimally evolved for utilizing this synthetic substrate. The polypeptide is Parathion hydrolase (opd) (Brevundimonas diminuta (Pseudomonas diminuta)).